Consider the following 292-residue polypeptide: Ribosomal protein L11 methyltransferase (292 aa).

4 residues coordinate S-adenosyl-L-methionine: T144, G165, D187, and N229.

It belongs to the methyltransferase superfamily. PrmA family.

The protein localises to the cytoplasm. It catalyses the reaction L-lysyl-[protein] + 3 S-adenosyl-L-methionine = N(6),N(6),N(6)-trimethyl-L-lysyl-[protein] + 3 S-adenosyl-L-homocysteine + 3 H(+). Methylates ribosomal protein L11. This Pseudomonas putida (strain ATCC 700007 / DSM 6899 / JCM 31910 / BCRC 17059 / LMG 24140 / F1) protein is Ribosomal protein L11 methyltransferase.